Consider the following 154-residue polypeptide: Deoxyuridine 5'-triphosphate nucleotidohydrolase (154 aa).

Substrate is bound by residues 64 to 66 (RSG), Asn-77, 81 to 83 (TVD), and Lys-91.

Belongs to the dUTPase family. Homotrimer. Requires Mg(2+) as cofactor.

The catalysed reaction is dUTP + H2O = dUMP + diphosphate + H(+). Its pathway is pyrimidine metabolism; dUMP biosynthesis; dUMP from dCTP (dUTP route): step 2/2. This enzyme is involved in nucleotide metabolism: it produces dUMP, the immediate precursor of thymidine nucleotides and it decreases the intracellular concentration of dUTP so that uracil cannot be incorporated into DNA. This chain is Deoxyuridine 5'-triphosphate nucleotidohydrolase, found in Mycolicibacterium gilvum (strain PYR-GCK) (Mycobacterium gilvum (strain PYR-GCK)).